Here is a 636-residue protein sequence, read N- to C-terminus: Putative cysteine-rich receptor-like protein kinase 33 (636 aa).

Positions 1–25 are cleaved as a signal peptide; that stretch reads MRKTKKISFLIFWVVLISIIGAISS. Gnk2-homologous domains are found at residues 26–128 and 138–245; these read QQCN…NSSF and YMEH…LYPF. Residues 26 to 266 lie on the Extracellular side of the membrane; that stretch reads QQCNETGYFE…PGSKRNISVG (241 aa). N-linked (GlcNAc...) asparagine glycosylation is found at Asn-29, Asn-63, Asn-105, Asn-125, Asn-149, Asn-173, Asn-185, Asn-188, Asn-250, and Asn-262. Residues 267–287 traverse the membrane as a helical segment; it reads FFVAIVVATGVVISVLSTLVV. Residues 288-636 lie on the Cytoplasmic side of the membrane; sequence VLVCRKRKTD…DSLIDDLVPR (349 aa). In terms of domain architecture, Protein kinase spans 321-600; sequence FSKCNMLGQG…MMLTSNSITL (280 aa). ATP-binding positions include 327–335 and Lys-349; that span reads LGQGGFGEV. Position 394 is a phosphotyrosine (Tyr-394). Asp-446 functions as the Proton acceptor in the catalytic mechanism. At Ser-450 the chain carries Phosphoserine. Thr-486 is modified (phosphothreonine). Tyr-494 is subject to Phosphotyrosine.

This sequence belongs to the protein kinase superfamily. Ser/Thr protein kinase family. CRK subfamily.

It is found in the membrane. The enzyme catalyses L-seryl-[protein] + ATP = O-phospho-L-seryl-[protein] + ADP + H(+). The catalysed reaction is L-threonyl-[protein] + ATP = O-phospho-L-threonyl-[protein] + ADP + H(+). This Arabidopsis thaliana (Mouse-ear cress) protein is Putative cysteine-rich receptor-like protein kinase 33 (CRK33).